Consider the following 233-residue polypeptide: Large ribosomal subunit protein bL25 (233 aa).

The interval 1–23 (MATVRELKATARPKSGKGAARAE) is disordered.

The protein belongs to the bacterial ribosomal protein bL25 family. CTC subfamily. Part of the 50S ribosomal subunit; part of the 5S rRNA/L5/L18/L25 subcomplex. Contacts the 5S rRNA. Binds to the 5S rRNA independently of L5 and L18.

In terms of biological role, this is one of the proteins that binds to the 5S RNA in the ribosome where it forms part of the central protuberance. The protein is Large ribosomal subunit protein bL25 of Nitrobacter hamburgensis (strain DSM 10229 / NCIMB 13809 / X14).